Consider the following 177-residue polypeptide: Large ribosomal subunit protein uL6 (177 aa).

Belongs to the universal ribosomal protein uL6 family. In terms of assembly, part of the 50S ribosomal subunit.

Its function is as follows. This protein binds to the 23S rRNA, and is important in its secondary structure. It is located near the subunit interface in the base of the L7/L12 stalk, and near the tRNA binding site of the peptidyltransferase center. The polypeptide is Large ribosomal subunit protein uL6 (Rhodospirillum centenum (strain ATCC 51521 / SW)).